A 537-amino-acid chain; its full sequence is Spore coat protein SP70 (537 aa).

The N-terminal stretch at 1–20 (MRILKLAALSCLLFIAPSLS) is a signal peptide. The DSCP-N domain maps to 21-140 (INCDGLSKDQ…CQIPATGGGP (120 aa)). Asparagine 97 carries N-linked (GlcNAc...) asparagine glycosylation. One can recognise a Follistatin-like 1 domain in the interval 157 to 179 (SCDKVNCPNGYICTIVNQLAVCV). Residues 183-246 (SSSSSSSSTT…GSHTTTGGST (64 aa)) form a disordered region. Follistatin-like domains lie at 250–272 (TCGN…AVCV), 278–296 (SCAN…GECI), 358–380 (TCKT…PTCV), and 389–415 (TCKD…EECC).

Phosphorylated and fucosylated.

The polypeptide is Spore coat protein SP70 (cotB) (Dictyostelium discoideum (Social amoeba)).